The chain runs to 313 residues: Cyclin-dependent kinase B2-1 (313 aa).

Methionine 1 is modified (N-acetylmethionine). The Protein kinase domain occupies 14-304 (FEKLEKVGEG…AKMAMEHPYF (291 aa)). Residues 20–28 (VGEGTYGKV) and lysine 43 contribute to the ATP site. Tyrosine 25 carries the post-translational modification Phosphotyrosine. Aspartate 145 functions as the Proton acceptor in the catalytic mechanism. Threonine 179 carries the phosphothreonine modification.

The protein belongs to the protein kinase superfamily. CMGC Ser/Thr protein kinase family. CDC2/CDKX subfamily. Interacts with CYCD4-1 and CKS1. In terms of tissue distribution, expressed in root tips, shoot apical meristem, leaf primordia vascular tissues and tapetum of anthers.

The enzyme catalyses L-seryl-[protein] + ATP = O-phospho-L-seryl-[protein] + ADP + H(+). It catalyses the reaction L-threonyl-[protein] + ATP = O-phospho-L-threonyl-[protein] + ADP + H(+). It carries out the reaction [DNA-directed RNA polymerase] + ATP = phospho-[DNA-directed RNA polymerase] + ADP + H(+). In Arabidopsis thaliana (Mouse-ear cress), this protein is Cyclin-dependent kinase B2-1 (CDKB2-1).